A 140-amino-acid chain; its full sequence is Putative transmembrane protein 49 (140 aa).

The next 2 membrane-spanning stretches (helical) occupy residues 23-43 (LIMS…IGGV) and 93-110 (IAVH…RYMY).

The protein resides in the host membrane. The chain is Putative transmembrane protein 49 (SIFV0049) from Saccharolobus islandicus (Sulfolobus islandicus).